The following is a 315-amino-acid chain: Tetraacyldisaccharide 4'-kinase (315 aa).

Residue 52–59 (TVGGTGKT) participates in ATP binding.

Belongs to the LpxK family.

The enzyme catalyses a lipid A disaccharide + ATP = a lipid IVA + ADP + H(+). It participates in glycolipid biosynthesis; lipid IV(A) biosynthesis; lipid IV(A) from (3R)-3-hydroxytetradecanoyl-[acyl-carrier-protein] and UDP-N-acetyl-alpha-D-glucosamine: step 6/6. Its function is as follows. Transfers the gamma-phosphate of ATP to the 4'-position of a tetraacyldisaccharide 1-phosphate intermediate (termed DS-1-P) to form tetraacyldisaccharide 1,4'-bis-phosphate (lipid IVA). The protein is Tetraacyldisaccharide 4'-kinase of Ruthia magnifica subsp. Calyptogena magnifica.